Here is a 483-residue protein sequence, read N- to C-terminus: Aspartyl/glutamyl-tRNA(Asn/Gln) amidotransferase subunit B (483 aa).

Belongs to the GatB/GatE family. GatB subfamily. Heterotrimer of A, B and C subunits.

The enzyme catalyses L-glutamyl-tRNA(Gln) + L-glutamine + ATP + H2O = L-glutaminyl-tRNA(Gln) + L-glutamate + ADP + phosphate + H(+). It catalyses the reaction L-aspartyl-tRNA(Asn) + L-glutamine + ATP + H2O = L-asparaginyl-tRNA(Asn) + L-glutamate + ADP + phosphate + 2 H(+). Its function is as follows. Allows the formation of correctly charged Asn-tRNA(Asn) or Gln-tRNA(Gln) through the transamidation of misacylated Asp-tRNA(Asn) or Glu-tRNA(Gln) in organisms which lack either or both of asparaginyl-tRNA or glutaminyl-tRNA synthetases. The reaction takes place in the presence of glutamine and ATP through an activated phospho-Asp-tRNA(Asn) or phospho-Glu-tRNA(Gln). This is Aspartyl/glutamyl-tRNA(Asn/Gln) amidotransferase subunit B from Brachyspira hyodysenteriae (strain ATCC 49526 / WA1).